A 321-amino-acid polypeptide reads, in one-letter code: Protein BIG GRAIN 1-like E (321 aa).

The tract at residues 134–217 (AGSKKNKSKS…PPPYLNTPTK (84 aa)) is disordered. The span at 135-147 (GSKKNKSKSKSKT) shows a compositional bias: basic residues. Low complexity predominate over residues 172-206 (ISHFFSSSRSTSTTTTTTASSSSKSLISSSSSGFR).

Belongs to the BIG GRAIN 1 (BG1) plant protein family.

It localises to the cell membrane. Its function is as follows. Involved in auxin transport. Regulator of the auxin signaling pathway. The protein is Protein BIG GRAIN 1-like E of Arabidopsis thaliana (Mouse-ear cress).